The following is a 271-amino-acid chain: MNFQSKFLTRSQSLKSLLCVGLDPDYCKLPEIIKRSPEPLVHFCREIIDATAPYAVAYKPNIAFFEVFGSSGIRQFEKVIGHLKNNYPQIPIVADIKRGDLDNTARQYARYYFGDLQVDSLTLSPYMGLDTLRPFLEYQDHLVFWLCLTSSPDSIQFQKKRFSETGRTLYEEVAYVANSISPLNLGFVVGATNTYELEILRKQNPDRIFLIPGFGAQGAKLDDLLPVCGRYSLINSSRGIHFASDGLDFAARANQEAEKIHNAMQARFVFL.

The active-site Proton donor is Lys97.

The protein belongs to the OMP decarboxylase family. Type 2 subfamily.

It catalyses the reaction orotidine 5'-phosphate + H(+) = UMP + CO2. The protein operates within pyrimidine metabolism; UMP biosynthesis via de novo pathway; UMP from orotate: step 2/2. This is Orotidine 5'-phosphate decarboxylase from Leptospira borgpetersenii serovar Hardjo-bovis (strain JB197).